We begin with the raw amino-acid sequence, 393 residues long: Lipid-A-disaccharide synthase (393 aa).

The protein belongs to the LpxB family.

The catalysed reaction is a lipid X + a UDP-2-N,3-O-bis[(3R)-3-hydroxyacyl]-alpha-D-glucosamine = a lipid A disaccharide + UDP + H(+). The protein operates within bacterial outer membrane biogenesis; LPS lipid A biosynthesis. Condensation of UDP-2,3-diacylglucosamine and 2,3-diacylglucosamine-1-phosphate to form lipid A disaccharide, a precursor of lipid A, a phosphorylated glycolipid that anchors the lipopolysaccharide to the outer membrane of the cell. The protein is Lipid-A-disaccharide synthase of Rhodopseudomonas palustris (strain HaA2).